Consider the following 97-residue polypeptide: Class II hydrophobin 1 (97 aa).

An N-terminal signal peptide occupies residues 1–16; the sequence is MKFFAIAALFAAAAVA. A propeptide spanning residues 17 to 22 is cleaved from the precursor; sequence QPLEDR. 4 disulfides stabilise this stretch: Cys-30/Cys-79, Cys-40/Cys-70, Cys-41/Cys-53, and Cys-80/Cys-91.

It belongs to the cerato-ulmin hydrophobin family. As to quaternary structure, homotetramer. Further self-assembles to form highly ordered films at water-air interfaces through intermolecular interactions.

The protein resides in the secreted. Its subcellular location is the cell wall. Its function is as follows. Aerial growth, conidiation, and dispersal of filamentous fungi in the environment rely upon a capability of their secreting small amphipathic proteins called hydrophobins (HPBs) with low sequence identity. Class I can self-assemble into an outermost layer of rodlet bundles on aerial cell surfaces, conferring cellular hydrophobicity that supports fungal growth, development and dispersal; whereas Class II form highly ordered films at water-air interfaces through intermolecular interactions but contribute nothing to the rodlet structure. Hbf1 is a class II hydrophobin that has a role in hyphal development and is in particular required for the formation of aerial hyphae. The protein is Class II hydrophobin 1 of Hypocrea jecorina (Trichoderma reesei).